A 242-amino-acid chain; its full sequence is D-proline reductase subunit gamma (242 aa).

The active-site Nucleophile is the Sec-152. Sec-152 is a non-standard amino acid (selenocysteine).

In terms of assembly, consists of 3 subunits of 23, 26 and 45 kDa (alpha, gamma and beta respectively). The molecular weight of the complex is approximately 870 kDa, suggesting a decameric structure, if all 3 subunits are present in equal stoichiometry. Post-translationally, this subunit is carbonylated in vitro on an unidentified residue.

Its subcellular location is the cytoplasm. It carries out the reaction [PrdC protein]-Se-L-selenocysteinyl-S-L-cysteine + 5-aminopentanoate = [PrdC protein]-L-selenocysteine/L-cysteine + D-proline. In terms of biological role, D-proline reductase catalyzes the reductive cleavage of a C-N bond in D-proline resulting in the formation of 5-aminovalerate. The alpha subunit has been shown to bind D-proline, presumably via the pyruvoyl group. The protein is D-proline reductase subunit gamma (prdB) of Acetoanaerobium sticklandii (strain ATCC 12662 / DSM 519 / JCM 1433 / CCUG 9281 / NCIMB 10654 / HF) (Clostridium sticklandii).